Here is a 218-residue protein sequence, read N- to C-terminus: tRNA (cytidine(56)-2'-O)-methyltransferase (218 aa).

S-adenosyl-L-methionine contacts are provided by residues leucine 81, 106-110, and 124-131; these read GAEKV and IGNQPHSE. Residues 170–218 form a disordered region; it reads KVGEEGPSGGAPGVRAERGRGGRGEGVQGADEVRGHKRGATDRDLGDET. Positions 200-218 are enriched in basic and acidic residues; that stretch reads DEVRGHKRGATDRDLGDET.

The protein belongs to the aTrm56 family. As to quaternary structure, homodimer.

The protein resides in the cytoplasm. It carries out the reaction cytidine(56) in tRNA + S-adenosyl-L-methionine = 2'-O-methylcytidine(56) in tRNA + S-adenosyl-L-homocysteine + H(+). Functionally, specifically catalyzes the AdoMet-dependent 2'-O-ribose methylation of cytidine at position 56 in tRNAs. This chain is tRNA (cytidine(56)-2'-O)-methyltransferase, found in Ignicoccus hospitalis (strain KIN4/I / DSM 18386 / JCM 14125).